The sequence spans 72 residues: DNA-directed RNA polymerase subunit Rpo10 (72 aa).

The Zn(2+) site is built by cysteine 7, cysteine 10, cysteine 53, and cysteine 54.

This sequence belongs to the archaeal Rpo10/eukaryotic RPB10 RNA polymerase subunit family. As to quaternary structure, part of the RNA polymerase complex. The cofactor is Zn(2+).

It localises to the cytoplasm. It catalyses the reaction RNA(n) + a ribonucleoside 5'-triphosphate = RNA(n+1) + diphosphate. In terms of biological role, DNA-dependent RNA polymerase (RNAP) catalyzes the transcription of DNA into RNA using the four ribonucleoside triphosphates as substrates. This chain is DNA-directed RNA polymerase subunit Rpo10, found in Thermoplasma acidophilum (strain ATCC 25905 / DSM 1728 / JCM 9062 / NBRC 15155 / AMRC-C165).